Reading from the N-terminus, the 216-residue chain is Pyrophosphatase PpaX (216 aa).

Aspartate 12 acts as the Nucleophile in catalysis.

Belongs to the HAD-like hydrolase superfamily. PpaX family. It depends on Mg(2+) as a cofactor.

It catalyses the reaction diphosphate + H2O = 2 phosphate + H(+). Hydrolyzes pyrophosphate formed during P-Ser-HPr dephosphorylation by HPrK/P. Might play a role in controlling the intracellular pyrophosphate pool. The chain is Pyrophosphatase PpaX from Bacillus pumilus (strain SAFR-032).